The sequence spans 95 residues: Cell division topological specificity factor (95 aa).

The protein belongs to the MinE family.

Its function is as follows. Prevents the cell division inhibition by proteins MinC and MinD at internal division sites while permitting inhibition at polar sites. This ensures cell division at the proper site by restricting the formation of a division septum at the midpoint of the long axis of the cell. The sequence is that of Cell division topological specificity factor from Microcystis aeruginosa (strain NIES-843 / IAM M-2473).